A 242-amino-acid chain; its full sequence is Biosynthetic peptidoglycan transglycosylase (242 aa).

The chain crosses the membrane as a helical span at residues 19–39 (LMVVLAVFWGGGIALFSVAPV).

This sequence belongs to the glycosyltransferase 51 family.

It is found in the cell inner membrane. It catalyses the reaction [GlcNAc-(1-&gt;4)-Mur2Ac(oyl-L-Ala-gamma-D-Glu-L-Lys-D-Ala-D-Ala)](n)-di-trans,octa-cis-undecaprenyl diphosphate + beta-D-GlcNAc-(1-&gt;4)-Mur2Ac(oyl-L-Ala-gamma-D-Glu-L-Lys-D-Ala-D-Ala)-di-trans,octa-cis-undecaprenyl diphosphate = [GlcNAc-(1-&gt;4)-Mur2Ac(oyl-L-Ala-gamma-D-Glu-L-Lys-D-Ala-D-Ala)](n+1)-di-trans,octa-cis-undecaprenyl diphosphate + di-trans,octa-cis-undecaprenyl diphosphate + H(+). Its pathway is cell wall biogenesis; peptidoglycan biosynthesis. In terms of biological role, peptidoglycan polymerase that catalyzes glycan chain elongation from lipid-linked precursors. The polypeptide is Biosynthetic peptidoglycan transglycosylase (Escherichia coli (strain 55989 / EAEC)).